The primary structure comprises 529 residues: MVTINDLSFNPDYSSISVSTSDGFKIFNCEPFGEFYSSQESPLRKSISNSLEDSAGCQNPTHSKTDSQDTPARFPTAFLKMLFSTSLTIVVPQTQDNLGNRLLKIYNLKQNLKICELNFPSSIIDIKLNRKRLLVVLDTGQLYIYDLSCVRLLKILQLSFNEHDGDQKFIGDLSADDSSWLIIPVQSTNNQTDLLNAETGSQPSTPKLTPSDSVINTGSYSQYLEFTRNSSLSNLKKKNKLITLEDIKNDSEGWVVVYDTINLAPVVIFEAHHSTIARICISHRDNKVATASIKGTIIRIFDLKEFEGKVKVHKVKNLRRGHNLVKVNSLSFHNDNHILGCGSESNTIHLFKIHEEESDICTNENSEDRTNHNSDYEDSDGDTSKSSEDLNENLANLLISKPLDPVPMETEDKLSSSWFVKTKKLINNQYTSSIIKKLPYKDYFENLIWEPPQRSFAYIKLPEYAPHNEKDPRSNKVEIGFNNDLVFIASYHTGNFYQYQIPKQRGPVSSINEDDKREECSLISQFNLI.

Residues 49 to 62 are compositionally biased toward polar residues; that stretch reads NSLEDSAGCQNPTH. A disordered region spans residues 49–70; sequence NSLEDSAGCQNPTHSKTDSQDT. WD repeat units lie at residues 271-311 and 321-361; these read AHHS…GKVK and GHNL…SDIC. The L/FRRG motif motif lies at 318 to 322; that stretch reads LRRGH. The disordered stretch occupies residues 362-388; it reads TNENSEDRTNHNSDYEDSDGDTSKSSE. Residues 366-375 show a composition bias toward basic and acidic residues; sequence SEDRTNHNSD.

The protein belongs to the WD repeat PROPPIN family.

It localises to the cytoplasm. The protein resides in the membrane. Its subcellular location is the vacuole membrane. Functionally, required for cytoplasm to vacuole transport (Cvt) vesicles formation and mitophagy. Involved in binding of phosphatidylethanolamine to ATG8 and in recruitment of ATG8 and ATG5 to the pre-autophagosomal structure. Protects ATG8 from ARG4-mediated cleavage. This is Autophagy-related protein 21 (ATG21) from Candida albicans (strain SC5314 / ATCC MYA-2876) (Yeast).